The sequence spans 396 residues: Mannonate dehydratase (396 aa).

It belongs to the mannonate dehydratase family. It depends on Fe(2+) as a cofactor. Requires Mn(2+) as cofactor.

It carries out the reaction D-mannonate = 2-dehydro-3-deoxy-D-gluconate + H2O. The protein operates within carbohydrate metabolism; pentose and glucuronate interconversion. In terms of biological role, catalyzes the dehydration of D-mannonate. The sequence is that of Mannonate dehydratase from Yersinia enterocolitica serotype O:8 / biotype 1B (strain NCTC 13174 / 8081).